The sequence spans 126 residues: Glycine cleavage system H protein (126 aa).

One can recognise a Lipoyl-binding domain in the interval 24-105; the sequence is TLTVGITDHA…AYGVWLFKIK (82 aa). Lys65 is subject to N6-lipoyllysine.

The protein belongs to the GcvH family. As to quaternary structure, the glycine cleavage system is composed of four proteins: P, T, L and H. (R)-lipoate is required as a cofactor.

Functionally, the glycine cleavage system catalyzes the degradation of glycine. The H protein shuttles the methylamine group of glycine from the P protein to the T protein. The protein is Glycine cleavage system H protein of Burkholderia cenocepacia (strain HI2424).